The chain runs to 515 residues: 2,3-bisphosphoglycerate-independent phosphoglycerate mutase (515 aa).

Positions 14 and 64 each coordinate Mn(2+). The active-site Phosphoserine intermediate is Ser-64. Substrate is bound by residues His-125, Arg-155–Asp-156, Arg-187, Arg-193, Arg-263–Arg-266, and Lys-337. Mn(2+) is bound by residues Asp-404, His-408, Asp-445, His-446, and His-464.

It belongs to the BPG-independent phosphoglycerate mutase family. In terms of assembly, monomer. Requires Mn(2+) as cofactor.

The enzyme catalyses (2R)-2-phosphoglycerate = (2R)-3-phosphoglycerate. The protein operates within carbohydrate degradation; glycolysis; pyruvate from D-glyceraldehyde 3-phosphate: step 3/5. In terms of biological role, catalyzes the interconversion of 2-phosphoglycerate and 3-phosphoglycerate. The polypeptide is 2,3-bisphosphoglycerate-independent phosphoglycerate mutase (Cronobacter sakazakii (strain ATCC BAA-894) (Enterobacter sakazakii)).